We begin with the raw amino-acid sequence, 268 residues long: ELL-associated factor 1 (268 aa).

The tract at residues 106–268 (IQVKKTRAEG…LSESGSDSDD (163 aa)) is disordered. Residues 128-154 (TRPPQTSQPPPPPPPMPFRAPTKPPVG) are compositionally biased toward pro residues. At serine 165 the chain carries Phosphoserine. Basic and acidic residues predominate over residues 171-181 (DDIKRELRAEV). The tract at residues 182-262 (DIIEQMSSSS…LRNDLQLSES (81 aa)) is necessary for transactivation activity. Over residues 188–213 (SSSSGSSSSDSESSSGSDDDSSSSGG) the composition is skewed to low complexity. Polar residues predominate over residues 238-268 (NGTSRPQGSNQLMNTLRNDLQLSESGSDSDD).

This sequence belongs to the EAF family. As to quaternary structure, component of the super elongation complex (SEC), at least composed of EAF1, EAF2, CDK9, MLLT3/AF9, AFF (AFF1 or AFF4), the P-TEFb complex and ELL (ELL, ELL2 or ELL3). Interacts with ELL and ELL2. In terms of tissue distribution, strongly expressed in heart, brain, placenta, lung, liver, skeletal muscle, kidney, pancreas, spleen, prostate, testis, small intestine and colon. Poorly expressed in thymus.

The protein resides in the nucleus speckle. Its subcellular location is the nucleus. The protein localises to the cajal body. Acts as a transcriptional transactivator of ELL and ELL2 elongation activities. This chain is ELL-associated factor 1 (EAF1), found in Homo sapiens (Human).